Consider the following 920-residue polypeptide: Chitin synthase C (920 aa).

2 disordered regions span residues 1 to 41 and 140 to 173; these read MSYN…NAYQ and IPML…SPAP. Over residues 154 to 163 the composition is skewed to acidic residues; it reads YSDEYQVEEQ. A run of 5 helical transmembrane segments spans residues 466-486, 564-584, 608-628, 640-660, and 675-695; these read SAFG…FVAL, RWLN…YQIW, LFAW…TTYL, VLGV…FVLA, and MVYF…FVTV. Asparagine 715 carries N-linked (GlcNAc...) asparagine glycosylation. A run of 4 helical transmembrane segments spans residues 718–738, 749–769, 847–867, and 892–912; these read FFTI…ASII, FIQY…YAFC, AVVL…LSAA, and VVLW…LWYL.

Belongs to the chitin synthase family. Class I subfamily.

It is found in the cell membrane. The enzyme catalyses [(1-&gt;4)-N-acetyl-beta-D-glucosaminyl](n) + UDP-N-acetyl-alpha-D-glucosamine = [(1-&gt;4)-N-acetyl-beta-D-glucosaminyl](n+1) + UDP + H(+). In terms of biological role, polymerizes chitin, a structural polymer of the cell wall and septum, by transferring the sugar moiety of UDP-GlcNAc to the non-reducing end of the growing chitin polymer. Involved in hyphal growth. The protein is Chitin synthase C of Aspergillus oryzae (strain ATCC 42149 / RIB 40) (Yellow koji mold).